A 126-amino-acid chain; its full sequence is Probable S-adenosyl-L-methionine-binding protein MJ1583 (126 aa).

One can recognise a TsaA-like domain in the interval 4 to 126; that stretch reads LKPIGVVEQN…FSEKLDCPKI (123 aa). S-adenosyl-L-methionine-binding positions include 45 to 46, arginine 75, and 106 to 109; these read HK and YNET.

It belongs to the tRNA methyltransferase O family.

The polypeptide is Probable S-adenosyl-L-methionine-binding protein MJ1583 (Methanocaldococcus jannaschii (strain ATCC 43067 / DSM 2661 / JAL-1 / JCM 10045 / NBRC 100440) (Methanococcus jannaschii)).